Here is a 456-residue protein sequence, read N- to C-terminus: Exodeoxyribonuclease 7 large subunit (456 aa).

It belongs to the XseA family. Heterooligomer composed of large and small subunits.

The protein resides in the cytoplasm. It carries out the reaction Exonucleolytic cleavage in either 5'- to 3'- or 3'- to 5'-direction to yield nucleoside 5'-phosphates.. In terms of biological role, bidirectionally degrades single-stranded DNA into large acid-insoluble oligonucleotides, which are then degraded further into small acid-soluble oligonucleotides. This is Exodeoxyribonuclease 7 large subunit from Lactobacillus gasseri (strain ATCC 33323 / DSM 20243 / BCRC 14619 / CIP 102991 / JCM 1131 / KCTC 3163 / NCIMB 11718 / NCTC 13722 / AM63).